The following is a 782-amino-acid chain: uncharacterized protein (782 aa).

3 disordered regions span residues 1 to 127 (MTTT…SAMK), 205 to 234 (NAAASQVNNRSNTSNSFDSHTTQKAGSYNP), and 308 to 355 (PYNF…SYLR). Positions 24–54 (KPQEEPTMKDKALLFEKQRQEKKMKHTEAKM) are enriched in basic and acidic residues. Low complexity predominate over residues 82–118 (KNVNNATSTNNATSTKNNTKNTPKNTPKNIPKNTTAK). Polar residues predominate over residues 312-324 (ARNNHGSDVSSAM). The segment covering 326–336 (NARRQASETRR) has biased composition (basic and acidic residues). Residues 337–346 (SNLSSYNDRN) show a composition bias toward polar residues. Residues 361–628 (MEKIRTEVDK…ERLRERLREL (268 aa)) adopt a coiled-coil conformation. Residues 629–668 (GSRDRSYNRSSRDRSHDRLYERSPRSRDRSSRDRSRDRYS) show a composition bias toward basic and acidic residues. Positions 629–689 (GSRDRSYNRS…SDSVKDYSVG (61 aa)) are disordered. Positions 669-678 (RSRSRSRYRR) are enriched in basic residues. Residues 679–689 (RSDSVKDYSVG) show a composition bias toward basic and acidic residues.

This is an uncharacterized protein from Yarrowia lipolytica (strain CLIB 122 / E 150) (Yeast).